Reading from the N-terminus, the 382-residue chain is Na(+)/H(+) antiporter NhaA 2 (382 aa).

Helical transmembrane passes span 7–27, 28–48, 52–72, 88–108, 118–138, 147–167, 170–190, 206–226, 254–274, 285–305, 325–345, and 356–376; these read AGGV…NSYL, SGFY…AFEI, LLLW…GLEV, VLPG…YASF, GWAI…SLFG, LFLL…IALF, HELS…LFVL, LVVW…GFVI, VAYF…LGGI, LGII…VCWL, GVCL…SLAF, and VKLG…LILT.

This sequence belongs to the NhaA Na(+)/H(+) (TC 2.A.33) antiporter family.

The protein localises to the cell inner membrane. The catalysed reaction is Na(+)(in) + 2 H(+)(out) = Na(+)(out) + 2 H(+)(in). Functionally, na(+)/H(+) antiporter that extrudes sodium in exchange for external protons. This Saccharophagus degradans (strain 2-40 / ATCC 43961 / DSM 17024) protein is Na(+)/H(+) antiporter NhaA 2.